The chain runs to 292 residues: Cbb3-type cytochrome c oxidase subunit CcoP (292 aa).

Transmembrane regions (helical) follow at residues 11–31 (FGLI…SSLI) and 62–82 (VGWI…FFFG). 2 consecutive Cytochrome c domains span residues 116–195 (ELVD…MAEI) and 205–288 (QLID…QSLK). Residues Cys-129, Cys-132, His-133, Met-174, Cys-219, Cys-222, His-223, and Met-264 each contribute to the heme c site.

The protein belongs to the CcoP / FixP family. Component of the cbb3-type cytochrome c oxidase at least composed of CcoN, CcoO, CcoQ and CcoP. Requires heme c as cofactor.

The protein resides in the cell inner membrane. Its pathway is energy metabolism; oxidative phosphorylation. In terms of biological role, C-type cytochrome. Part of the cbb3-type cytochrome c oxidase complex. CcoP subunit is required for transferring electrons from donor cytochrome c via its heme groups to CcoO subunit. From there, electrons are shuttled to the catalytic binuclear center of CcoN subunit where oxygen reduction takes place. The complex also functions as a proton pump. This is Cbb3-type cytochrome c oxidase subunit CcoP from Helicobacter pylori (strain 52).